A 495-amino-acid polypeptide reads, in one-letter code: MERWWFNSMLFKKEFERRCGLNKSMGSLGPIENTNEDPNRKVKNIHSWRNRDNSSCSNVDYLFGVKDIRNFISDDTFLVSDRNGDSYSIYFDIENHIFEIDNDHSFLSELESSFYSYRNLSYLNNGFRGEDPYYNSYMYDTQYSWNNHINSCIDSYLQSQICIDTSIISGSENYGDSYIYRAICGGESRNSSENEGSSRRTRTKGSDLTIRESSNDLEVTQKYRHLWVQCENCYGLNYKKFFKSKMNICEQCGYHLKMSSSDRIELLIDPGTWDPMDEDMVSLDPIEFHSEEEPYKDRIDSYQRKTGLTEAVQTGIGQLNGIPVAIGVMDFQFMGGSMGSVVGEKITRLIERAANQILPLIIVCASGGARMQEGSLSLMQMAKISSALYDYQLNKKLFYVSILTSPTTGGVTASFGMLGDIIIAEPNAYIAFAGKRVIEQTLNKTVPEGSQAAEYLFQKGLFDLIVPRNLLKSVLSELFKLHAFFPLNQKSSKIK.

Residues 188 to 208 (SRNSSENEGSSRRTRTKGSDL) form a disordered region. One can recognise a CoA carboxyltransferase N-terminal domain in the interval 226–495 (LWVQCENCYG…PLNQKSSKIK (270 aa)). 4 residues coordinate Zn(2+): cysteine 230, cysteine 233, cysteine 249, and cysteine 252. The segment at 230-252 (CENCYGLNYKKFFKSKMNICEQC) adopts a C4-type zinc-finger fold.

This sequence belongs to the AccD/PCCB family. In terms of assembly, acetyl-CoA carboxylase is a heterohexamer composed of biotin carboxyl carrier protein, biotin carboxylase and 2 subunits each of ACCase subunit alpha and ACCase plastid-coded subunit beta (accD). Requires Zn(2+) as cofactor.

The protein localises to the plastid. It is found in the chloroplast stroma. It carries out the reaction N(6)-carboxybiotinyl-L-lysyl-[protein] + acetyl-CoA = N(6)-biotinyl-L-lysyl-[protein] + malonyl-CoA. It participates in lipid metabolism; malonyl-CoA biosynthesis; malonyl-CoA from acetyl-CoA: step 1/1. Component of the acetyl coenzyme A carboxylase (ACC) complex. Biotin carboxylase (BC) catalyzes the carboxylation of biotin on its carrier protein (BCCP) and then the CO(2) group is transferred by the transcarboxylase to acetyl-CoA to form malonyl-CoA. This Nicotiana tomentosiformis (Tobacco) protein is Acetyl-coenzyme A carboxylase carboxyl transferase subunit beta, chloroplastic.